Consider the following 157-residue polypeptide: Crossover junction endodeoxyribonuclease RuvC (157 aa).

Catalysis depends on residues D7, E66, and D139. 3 residues coordinate Mg(2+): D7, E66, and D139.

Belongs to the RuvC family. As to quaternary structure, homodimer which binds Holliday junction (HJ) DNA. The HJ becomes 2-fold symmetrical on binding to RuvC with unstacked arms; it has a different conformation from HJ DNA in complex with RuvA. In the full resolvosome a probable DNA-RuvA(4)-RuvB(12)-RuvC(2) complex forms which resolves the HJ. The cofactor is Mg(2+).

It localises to the cytoplasm. The catalysed reaction is Endonucleolytic cleavage at a junction such as a reciprocal single-stranded crossover between two homologous DNA duplexes (Holliday junction).. In terms of biological role, the RuvA-RuvB-RuvC complex processes Holliday junction (HJ) DNA during genetic recombination and DNA repair. Endonuclease that resolves HJ intermediates. Cleaves cruciform DNA by making single-stranded nicks across the HJ at symmetrical positions within the homologous arms, yielding a 5'-phosphate and a 3'-hydroxyl group; requires a central core of homology in the junction. The consensus cleavage sequence is 5'-(A/T)TT(C/G)-3'. Cleavage occurs on the 3'-side of the TT dinucleotide at the point of strand exchange. HJ branch migration catalyzed by RuvA-RuvB allows RuvC to scan DNA until it finds its consensus sequence, where it cleaves and resolves the cruciform DNA. This Campylobacter concisus (strain 13826) protein is Crossover junction endodeoxyribonuclease RuvC.